Consider the following 72-residue polypeptide: Conorfamide-Tx2 (72 aa).

Positions 1-19 are cleaved as a signal peptide; it reads MSGRGFLLLALLLLVTVEA. The propeptide occupies 20 to 25; that stretch reads TRVEKK. The segment at 32–39 is positively charged region crucial for activity against MRGPRX1 receptors; sequence AWSGPRNR. An Isoleucine amide modification is found at I43. A propeptide spanning residues 44-72 is cleaved from the precursor; sequence GRRDMQSPLLSERLRFRALGFRQPSSQKQ.

The protein belongs to the FARP (FMRFamide related peptide) family. In terms of tissue distribution, expressed by the venom duct.

Its subcellular location is the secreted. Functionally, this peptide activates human sensory neuron-specific G-protein coupled receptors MRGPRX1, but not mouse receptors (EC(50)=0.54 uM). Compared with the agonist chloroquine (anti-malaria drug), it is 600-fold more potent. In vivo, induces itch sensation, since intradermal cheek injection into humanized transgenic mouse (mouse MRGPRX1 replaced by human MRGPRX1) induces scratching. In vivo, treatment of zebrafish larvae with high doses (10 uM) induces hypoactivity at the beginning of the experiment during the dark phase and hyperactivity in the strobe phase after one hour, even after the removal of the toxin from the solution. This chain is Conorfamide-Tx2, found in Conus textile (Cloth-of-gold cone).